The sequence spans 191 residues: Phosphoheptose isomerase (191 aa).

The SIS domain occupies 34–191; the sequence is IATALKDGNK…LVEEMVCERS (158 aa). 49-51 provides a ligand contact to substrate; it reads NGG. 2 residues coordinate Zn(2+): histidine 58 and glutamate 62. Residues glutamate 62, 91–92, 117–119, serine 122, and glutamine 169 each bind substrate; these read ND and TTS. Residues glutamine 169 and histidine 177 each contribute to the Zn(2+) site.

This sequence belongs to the SIS family. GmhA subfamily. Zn(2+) is required as a cofactor.

The protein resides in the cytoplasm. The enzyme catalyses 2 D-sedoheptulose 7-phosphate = D-glycero-alpha-D-manno-heptose 7-phosphate + D-glycero-beta-D-manno-heptose 7-phosphate. The protein operates within carbohydrate biosynthesis; D-glycero-D-manno-heptose 7-phosphate biosynthesis; D-glycero-alpha-D-manno-heptose 7-phosphate and D-glycero-beta-D-manno-heptose 7-phosphate from sedoheptulose 7-phosphate: step 1/1. In terms of biological role, catalyzes the isomerization of sedoheptulose 7-phosphate in D-glycero-D-manno-heptose 7-phosphate. This Aquifex aeolicus (strain VF5) protein is Phosphoheptose isomerase.